The sequence spans 405 residues: Glucose-1-phosphate adenylyltransferase 1 (405 aa).

Residues Y96, G161, 176-177 (EK), and S194 each bind alpha-D-glucose 1-phosphate.

This sequence belongs to the bacterial/plant glucose-1-phosphate adenylyltransferase family. Homotetramer.

It catalyses the reaction alpha-D-glucose 1-phosphate + ATP + H(+) = ADP-alpha-D-glucose + diphosphate. It participates in glycan biosynthesis; glycogen biosynthesis. Involved in the biosynthesis of ADP-glucose, a building block required for the elongation reactions to produce glycogen. Catalyzes the reaction between ATP and alpha-D-glucose 1-phosphate (G1P) to produce pyrophosphate and ADP-Glc. The chain is Glucose-1-phosphate adenylyltransferase 1 from Vibrio cholerae serotype O1 (strain ATCC 39315 / El Tor Inaba N16961).